Reading from the N-terminus, the 416-residue chain is Serine hydroxymethyltransferase (416 aa).

(6S)-5,6,7,8-tetrahydrofolate contacts are provided by residues Leu-121 and 125-127 (GHL). Lys-230 is subject to N6-(pyridoxal phosphate)lysine. Residue 354–356 (SPF) participates in (6S)-5,6,7,8-tetrahydrofolate binding.

The protein belongs to the SHMT family. In terms of assembly, homodimer. Requires pyridoxal 5'-phosphate as cofactor.

The protein localises to the cytoplasm. It carries out the reaction (6R)-5,10-methylene-5,6,7,8-tetrahydrofolate + glycine + H2O = (6S)-5,6,7,8-tetrahydrofolate + L-serine. The protein operates within one-carbon metabolism; tetrahydrofolate interconversion. It participates in amino-acid biosynthesis; glycine biosynthesis; glycine from L-serine: step 1/1. Catalyzes the reversible interconversion of serine and glycine with tetrahydrofolate (THF) serving as the one-carbon carrier. This reaction serves as the major source of one-carbon groups required for the biosynthesis of purines, thymidylate, methionine, and other important biomolecules. Also exhibits THF-independent aldolase activity toward beta-hydroxyamino acids, producing glycine and aldehydes, via a retro-aldol mechanism. This chain is Serine hydroxymethyltransferase, found in Prochlorococcus marinus (strain MIT 9211).